Consider the following 262-residue polypeptide: Nurim (262 aa).

Residues 1–4 (MAPA) are Nuclear-facing. A helical membrane pass occupies residues 5–28 (LLLVPAALASFILAFGTGVEFVRF). The Perinuclear space portion of the chain corresponds to 29 to 58 (TSLRPLLGGIPESGGPDARQGWLAALQDRS). The helical transmembrane segment at 59–80 (ILAPLAWDLGLLLLFVGQHSLM) threads the bilayer. Over 81–97 (AAERVKAWTSRYFGVLQ) the chain is Nuclear. The chain crosses the membrane as a helical span at residues 98–114 (RSLYVACTALALQLVMR). Topologically, residues 115–133 (YWEPIPKGPVLWEARAEPW) are perinuclear space. A helical membrane pass occupies residues 134–164 (ATWVPLLCFVLHVISWLLIFSILLVFDYAEL). Topologically, residues 165–191 (MGLKQVYYHVLGLGEPLALKSPRALRL) are nuclear. Residues 192-210 (FSHLRHPVCVELLTVLWVV) form a helical membrane-spanning segment. The Perinuclear space segment spans residues 211–216 (PTLGTD). The helical transmembrane segment at 217 to 234 (RLLLAFLLTLYLGLAHGL) threads the bilayer. At 235–262 (DQQDLRYLRAQLQRKLHLLSRPQDGEAE) the chain is on the nuclear side.

This sequence belongs to the nurim family.

Its subcellular location is the nucleus inner membrane. This Pan troglodytes (Chimpanzee) protein is Nurim (NRM).